The sequence spans 377 residues: Nitric oxide reductase FlRd-NAD(+) reductase (377 aa).

Belongs to the FAD-dependent oxidoreductase family. FAD is required as a cofactor.

It is found in the cytoplasm. It catalyses the reaction 2 reduced [nitric oxide reductase rubredoxin domain] + NAD(+) + H(+) = 2 oxidized [nitric oxide reductase rubredoxin domain] + NADH. The protein operates within nitrogen metabolism; nitric oxide reduction. Functionally, one of at least two accessory proteins for anaerobic nitric oxide (NO) reductase. Reduces the rubredoxin moiety of NO reductase. The protein is Nitric oxide reductase FlRd-NAD(+) reductase (norW) of Shigella boydii serotype 4 (strain Sb227).